A 245-amino-acid polypeptide reads, in one-letter code: DnaJ homolog subfamily B member 6-B (245 aa).

Positions 3–69 (EYYDVLGVQR…KKRDIYDKYG (67 aa)) constitute a J domain.

In terms of assembly, homooligomer.

It is found in the cytoplasm. Its subcellular location is the perinuclear region. It localises to the nucleus. Its function is as follows. Has a stimulatory effect on the ATPase activity of HSP70 in a dose-dependent and time-dependent manner and hence acts as a co-chaperone of HSP70. Plays an indispensable role in the organization of KRT8/KRT18 filaments. Acts as an endogenous molecular chaperone for neuronal proteins including huntingtin. Suppresses aggregation and toxicity of polyglutamine-containing, aggregation-prone proteins. Also reduces cellular toxicity and caspase-3 activity. In Xenopus laevis (African clawed frog), this protein is DnaJ homolog subfamily B member 6-B (dnajb6-b).